The following is a 59-amino-acid chain: Cuticle protein 16 isoform D (59 aa).

In Limulus polyphemus (Atlantic horseshoe crab), this protein is Cuticle protein 16 isoform D.